Here is a 738-residue protein sequence, read N- to C-terminus: MLGTKQVFSTEWGGRPLSVEVGQLAKQANGSALVRYGDTVVLATVTASKAPKDLDFFPLTVNYEEKLYSVGKIPGGFLRREGRPGENAILTSRLIDRPIRPLFPDGFRHDIQVMIYVMSNDPDCSAEMAGMLGTSIALSISDVPFDGPIAGVTVGRVDGEFVINPTTAQLEKTDLELQVAGTSTAINMVEAGANEVPEDVMLESILFGHEEIKRLIAFQQEIVEAVGKPKFEYTVSKYDEALTAELEAARPEIVEAVQVEEKHARDEAINEVIAKYVAMYEARLADEPSKLGEVSGILNKFVKDEVRRLITVEKVRPDGRRPDVIRPLASEVGLLPRAHGVGLFTRGQTQVMSVATLGVIGDAQIIDGIGLEENKRFMHHYNFPPFSVGEARPVRAPGRREIGHGALGERALLPIIPKEADFPYTIRLVSEVLESNGSSSQASICGSTLALMDAGVPIKAPVAGIAMGLIMEGEHYTVLTDIQGLEDHLGDMDFKVAGTKDGITALQMDIKIAGITREILEEALEQARVGRLHILDHMLETLETPRTQLSKYAPKIVTMTINPDKIRDVIGPGGKMINSIIDQTGVKIDIEQDGTVFIASTDQEGIDLAMSMIGDIVREVVVGEVYDATVRRIEKFGAFVELFKGKDALVHVSEFSLERVANVEDVVKLGDSIQVKVTEIDDKGRVNASRKALILEGLSPEEREAYEAKRKAARESRPPRDSRPPRRDGDRRPPRSTN.

Mg(2+) contacts are provided by aspartate 487 and aspartate 493. One can recognise a KH domain in the interval 554–613; that stretch reads PKIVTMTINPDKIRDVIGPGGKMINSIIDQTGVKIDIEQDGTVFIASTDQEGIDLAMSMI. The 69-residue stretch at 623-691 folds into the S1 motif domain; sequence GEVYDATVRR…DKGRVNASRK (69 aa). Residues 704–738 are disordered; the sequence is EAYEAKRKAARESRPPRDSRPPRRDGDRRPPRSTN.

Belongs to the polyribonucleotide nucleotidyltransferase family. Mg(2+) serves as cofactor.

The protein resides in the cytoplasm. It carries out the reaction RNA(n+1) + phosphate = RNA(n) + a ribonucleoside 5'-diphosphate. In terms of biological role, involved in mRNA degradation. Catalyzes the phosphorolysis of single-stranded polyribonucleotides processively in the 3'- to 5'-direction. This is Polyribonucleotide nucleotidyltransferase from Exiguobacterium sp. (strain ATCC BAA-1283 / AT1b).